The primary structure comprises 170 residues: Acetyl-CoA decarbonylase/synthase complex subunit epsilon 2 (170 aa).

The protein belongs to the CdhB family. As to quaternary structure, heterotetramer of two alpha and two epsilon subunits. The ACDS complex is made up of alpha, epsilon, beta, gamma and delta subunits with a probable stoichiometry of (alpha(2)epsilon(2))(4)-beta(8)-(gamma(1)delta(1))(8).

It participates in one-carbon metabolism; methanogenesis from acetate. In terms of biological role, part of a complex that catalyzes the reversible cleavage of acetyl-CoA, allowing growth on acetate as sole source of carbon and energy. The alpha-epsilon subcomponent functions as a carbon monoxide dehydrogenase. The precise role of the epsilon subunit is unclear; it may have a stabilizing role within the alpha(2)epsilon(2) component and/or be involved in electron transfer to FAD during a potential FAD-mediated CO oxidation. This is Acetyl-CoA decarbonylase/synthase complex subunit epsilon 2 (cdhB2) from Methanosarcina mazei (strain ATCC BAA-159 / DSM 3647 / Goe1 / Go1 / JCM 11833 / OCM 88) (Methanosarcina frisia).